The chain runs to 444 residues: Methylenetetrahydrofolate--tRNA-(uracil-5-)-methyltransferase TrmFO (444 aa).

FAD is bound at residue G10–G15.

This sequence belongs to the MnmG family. TrmFO subfamily. FAD is required as a cofactor.

It is found in the cytoplasm. The catalysed reaction is uridine(54) in tRNA + (6R)-5,10-methylene-5,6,7,8-tetrahydrofolate + NADH + H(+) = 5-methyluridine(54) in tRNA + (6S)-5,6,7,8-tetrahydrofolate + NAD(+). It catalyses the reaction uridine(54) in tRNA + (6R)-5,10-methylene-5,6,7,8-tetrahydrofolate + NADPH + H(+) = 5-methyluridine(54) in tRNA + (6S)-5,6,7,8-tetrahydrofolate + NADP(+). Functionally, catalyzes the folate-dependent formation of 5-methyl-uridine at position 54 (M-5-U54) in all tRNAs. In Streptococcus uberis (strain ATCC BAA-854 / 0140J), this protein is Methylenetetrahydrofolate--tRNA-(uracil-5-)-methyltransferase TrmFO.